A 60-amino-acid chain; its full sequence is MDTTFVITPMGMLTITDTLYDDLDISIMDFIGPYIIGNIKTVQIDVRDIKYSDMQKCYFS.

The protein belongs to the chordopoxvirinae A35 protein family.

In Variola virus (isolate Human/India/Ind3/1967) (VARV), this protein is Truncated protein A35 homolog (A38R).